Reading from the N-terminus, the 30-residue chain is Cliotide T19 (30 aa).

A cross-link (cyclopeptide (Gly-Asn)) is located at residues 1–30 (GSVIKCGESCLLGKCYTPGCTCSRPICKKN). 3 disulfides stabilise this stretch: Cys-6–Cys-20, Cys-10–Cys-22, and Cys-15–Cys-27.

Contains 3 disulfide bonds. Post-translationally, this is a cyclic peptide. As to expression, expressed in root nodules but not in seed.

Its function is as follows. Probably participates in a plant defense mechanism. Active against Gram-negative bacterium E.coli ATCC 700926 (MIC=0.6 uM) under low-salt conditions. Not active against Gram-positive bacterium S.aureus ATCC 12600 up to a concentration of 100 uM under low-salt conditions. Exhibits immunomodulatory activity but no cytotoxicity in vitro. The polypeptide is Cliotide T19 (Clitoria ternatea (Butterfly pea)).